A 541-amino-acid polypeptide reads, in one-letter code: Protopine 6-monooxygenase (541 aa).

The chain crosses the membrane as a helical span at residues 9–29; the sequence is LLLNTWISAYSMAALLALVLV. Position 476 (Cys476) interacts with heme.

It belongs to the cytochrome P450 family. It depends on heme as a cofactor.

It is found in the endoplasmic reticulum membrane. The enzyme catalyses protopine + reduced [NADPH--hemoprotein reductase] + O2 = 6-hydroxyprotopine + oxidized [NADPH--hemoprotein reductase] + H2O + H(+). It functions in the pathway alkaloid biosynthesis. Its function is as follows. Catalyzes the conversion of protopine and allocryptopine to dihydrosanguinarine and dihydrochelerythrine, respectively, in the biosynthesis of isoquinoline alkaloid sanguinarine. The chain is Protopine 6-monooxygenase (CYP82N3) from Papaver somniferum (Opium poppy).